The sequence spans 201 residues: Protease (201 aa).

Active-site residues include His55, Asp72, and Cys122.

This sequence belongs to the peptidase C5 family. Interacts with protease cofactor pVI-C; this interaction is necessary for protease activation.

Its subcellular location is the virion. The protein resides in the host nucleus. It catalyses the reaction Cleaves proteins of the adenovirus and its host cell at two consensus sites: -Yaa-Xaa-Gly-Gly-|-Xaa- and -Yaa-Xaa-Gly-Xaa-|-Gly- (in which Yaa is Met, Ile or Leu, and Xaa is any amino acid).. Requires DNA and protease cofactor for maximal activation. Inside nascent virions, becomes partially activated by binding to the viral DNA, allowing it to cleave the cofactor that binds to the protease and fully activates it. Actin, like the viral protease cofactor, seems to act as a cofactor in the cleavage of cytokeratin 18 and of actin itself. Its function is as follows. Cleaves viral precursor proteins (pTP, pIIIa, pVI, pVII, pVIII, and pX) inside newly assembled particles giving rise to mature virions. Protease complexed to its cofactor slides along the viral DNA to specifically locate and cleave the viral precursors. Mature virions have a weakened organization compared to the unmature virions, thereby facilitating subsequent uncoating. Without maturation, the particle lacks infectivity and is unable to uncoat. Late in adenovirus infection, in the cytoplasm, may participate in the cytoskeleton destruction. Cleaves host cell cytoskeletal keratins K7 and K18. The protein is Protease of Bovine adenovirus 4 (BAdV-4).